Reading from the N-terminus, the 1508-residue chain is Calponin homology domain-containing protein DDB_G0272472 (1508 aa).

6 disordered regions span residues 1–165 (MFRN…KNDF), 197–290 (DSEE…NLSP), 309–518 (DFKS…TSIV), 531–561 (AANATTTNNDNNNNNNNTSSPTNKSTNLFND), 680–706 (KEKQDQLEKQRKLEQQRLQKEKDEKEL), and 1036–1391 (KIEK…KKSA). Residues 81–107 (SSSPSTSTTTTTKSSSTTTTTTTSSSS) show a composition bias toward low complexity. Over residues 208–222 (PIKKKQSNDLEKNIF) the composition is skewed to basic and acidic residues. Composition is skewed to low complexity over residues 234–251 (KQSTVTKPKQPQQQQKQP), 263–290 (FGDSSLSLDSPLLASKSSPPKSSVNLSP), and 315–332 (SNNTTTVKKAVPISKSKP). 2 stretches are compositionally biased toward basic and acidic residues: residues 337 to 346 (QKEEIKEVST) and 362 to 371 (VDEKPKERST). Positions 380–391 (KTVTVKSNNSFE) are enriched in polar residues. Low complexity predominate over residues 395-438 (FGSTTTNDDGGDNDFSFTPATTPSSSSSTKATTTSPSSTTTTKS). Over residues 439 to 452 (NINIGQKSNKSVDQ) the composition is skewed to polar residues. A coiled-coil region spans residues 455 to 498 (QFLNDIFQQEEQDKKRREEEAKLKQQQKQKEKEQIKDEIDDLFK). The span at 465–498 (EQDKKRREEEAKLKQQQKQKEKEQIKDEIDDLFK) shows a compositional bias: basic and acidic residues. Low complexity-rich tracts occupy residues 500 to 516 (SKPTTTTTSTPSKSTTS) and 531 to 557 (AANATTTNNDNNNNNNNTSSPTNKSTN). A compositionally biased stretch (basic and acidic residues) spans 1036–1164 (KIEKEKEERD…DQEEKEKQLK (129 aa)). 2 stretches are compositionally biased toward low complexity: residues 1165 to 1181 (EQQQQQKVIIPTTTTTT) and 1189 to 1206 (DSDALLNLPDSASSSSHS). A compositionally biased stretch (basic residues) spans 1216 to 1225 (SKAKGRKKPT). Over residues 1226 to 1235 (RRELTKDGNR) the composition is skewed to basic and acidic residues. Low complexity predominate over residues 1333 to 1355 (PTVTQTTTTTTTPPTTPPSSSVQ). The span at 1362–1374 (RSFSGSSFMGINS) shows a compositional bias: polar residues. Residues 1397–1504 (MKALDVLLQW…YLSEFFKVMK (108 aa)) enclose the Calponin-homology (CH) domain.

This chain is Calponin homology domain-containing protein DDB_G0272472, found in Dictyostelium discoideum (Social amoeba).